A 525-amino-acid polypeptide reads, in one-letter code: GMP synthase [glutamine-hydrolyzing] (525 aa).

Residues 9–207 (RILILDFGSQ…VRDICQCEAL (199 aa)) form the Glutamine amidotransferase type-1 domain. Cysteine 86 acts as the Nucleophile in catalysis. Active-site residues include histidine 181 and glutamate 183. Positions 208-400 (WTPAKIIDDA…LGLPYDMLYR (193 aa)) constitute a GMPS ATP-PPase domain. An ATP-binding site is contributed by 235–241 (SGGVDSS).

As to quaternary structure, homodimer.

It catalyses the reaction XMP + L-glutamine + ATP + H2O = GMP + L-glutamate + AMP + diphosphate + 2 H(+). Its pathway is purine metabolism; GMP biosynthesis; GMP from XMP (L-Gln route): step 1/1. Functionally, catalyzes the synthesis of GMP from XMP. This is GMP synthase [glutamine-hydrolyzing] from Shigella sonnei (strain Ss046).